We begin with the raw amino-acid sequence, 698 residues long: Polyribonucleotide nucleotidyltransferase (698 aa).

Positions 486 and 492 each coordinate Mg(2+). The 60-residue stretch at 553–612 folds into the KH domain; the sequence is PRIIVRNIPKDRIGELIGPGGKNVRGISELTGAELYIEDDGKVTISGSNQESAEKAAKMV. One can recognise an S1 motif domain in the interval 622–690; that stretch reads GKIYEGKVKR…KTGKIDLSRK (69 aa).

The protein belongs to the polyribonucleotide nucleotidyltransferase family. Mg(2+) is required as a cofactor.

It localises to the cytoplasm. The enzyme catalyses RNA(n+1) + phosphate = RNA(n) + a ribonucleoside 5'-diphosphate. In terms of biological role, involved in mRNA degradation. Catalyzes the phosphorolysis of single-stranded polyribonucleotides processively in the 3'- to 5'-direction. The polypeptide is Polyribonucleotide nucleotidyltransferase (Leptospira interrogans serogroup Icterohaemorrhagiae serovar copenhageni (strain Fiocruz L1-130)).